The chain runs to 428 residues: Type II methyltransferase M.TthHB8I (428 aa).

The disordered stretch occupies residues 407–428 (RKGNTERRKHGPYTSPESAGSF).

This sequence belongs to the N(4)/N(6)-methyltransferase family.

It carries out the reaction a 2'-deoxyadenosine in DNA + S-adenosyl-L-methionine = an N(6)-methyl-2'-deoxyadenosine in DNA + S-adenosyl-L-homocysteine + H(+). Its function is as follows. A gamma subtype methylase, recognizes the double-stranded sequence 5'-TCGA-3', methylates A-4 on both strands and protects the DNA from cleavage by the TthHB8I endonuclease. This chain is Type II methyltransferase M.TthHB8I, found in Thermus thermophilus (strain ATCC 27634 / DSM 579 / HB8).